We begin with the raw amino-acid sequence, 239 residues long: Small ribosomal subunit protein uS3c (239 aa).

A KH type-2 domain is found at 43 to 139 (IKNYIQKNRK…RFNISIEKVK (97 aa)). Positions 50–74 (NRKKGSNRKIESDSSSEVITHNRKM) are disordered.

It belongs to the universal ribosomal protein uS3 family. Part of the 30S ribosomal subunit.

The protein localises to the plastid. It localises to the chloroplast. The polypeptide is Small ribosomal subunit protein uS3c (rps3) (Triticum aestivum (Wheat)).